The primary structure comprises 272 residues: ATP synthase subunit a (272 aa).

Helical transmembrane passes span 41–61, 101–121, 147–167, 212–232, and 243–263; these read TLNIDSMFFSVVLGLLFLVLF, LIAPLALTIFVWVFLMNLMDL, DVNITLSMALGVFILILFYSI, LFGNMYAGELIFILIAGLLPW, and AIFHILIITLQAFIFMVLTIV.

The protein belongs to the ATPase A chain family. In terms of assembly, F-type ATPases have 2 components, CF(1) - the catalytic core - and CF(0) - the membrane proton channel. CF(1) has five subunits: alpha(3), beta(3), gamma(1), delta(1), epsilon(1). CF(0) has three main subunits: a(1), b(2) and c(9-12). The alpha and beta chains form an alternating ring which encloses part of the gamma chain. CF(1) is attached to CF(0) by a central stalk formed by the gamma and epsilon chains, while a peripheral stalk is formed by the delta and b chains.

The protein localises to the cell inner membrane. In terms of biological role, key component of the proton channel; it plays a direct role in the translocation of protons across the membrane. This Cronobacter sakazakii (strain ATCC BAA-894) (Enterobacter sakazakii) protein is ATP synthase subunit a.